The following is a 360-amino-acid chain: Ubiquitin carboxyl-terminal hydrolase MIY1 (360 aa).

The active-site Nucleophile is the Cys-28. The active-site Proton acceptor is the His-216. Positions 317-360 (KRKIHSHKKNSEIHAPVKKDKFKRRSSLLNAKASEKEKSECVVM) are disordered. 2 stretches are compositionally biased toward basic and acidic residues: residues 325 to 335 (KNSEIHAPVKK) and 349 to 360 (ASEKEKSECVVM).

It belongs to the MINDY deubiquitinase family. FAM63 subfamily.

It localises to the cytoplasm. It carries out the reaction Thiol-dependent hydrolysis of ester, thioester, amide, peptide and isopeptide bonds formed by the C-terminal Gly of ubiquitin (a 76-residue protein attached to proteins as an intracellular targeting signal).. In terms of biological role, hydrolase that can specifically remove 'Lys-48'-linked conjugated ubiquitin from proteins. Has endodeubiquitinase activity. In Saccharomyces cerevisiae (strain ATCC 204508 / S288c) (Baker's yeast), this protein is Ubiquitin carboxyl-terminal hydrolase MIY1.